A 340-amino-acid polypeptide reads, in one-letter code: Anthranilate phosphoribosyltransferase (340 aa).

Residues G80, 83 to 84 (GD), T88, 90 to 93 (NIST), 108 to 116 (KHGNRAMSS), and S120 each bind 5-phospho-alpha-D-ribose 1-diphosphate. G80 contacts anthranilate. Position 92 (S92) interacts with Mg(2+). Residue N111 coordinates anthranilate. Position 166 (R166) interacts with anthranilate. Residues D225 and E226 each coordinate Mg(2+).

This sequence belongs to the anthranilate phosphoribosyltransferase family. As to quaternary structure, homodimer. It depends on Mg(2+) as a cofactor.

The enzyme catalyses N-(5-phospho-beta-D-ribosyl)anthranilate + diphosphate = 5-phospho-alpha-D-ribose 1-diphosphate + anthranilate. Its pathway is amino-acid biosynthesis; L-tryptophan biosynthesis; L-tryptophan from chorismate: step 2/5. In terms of biological role, catalyzes the transfer of the phosphoribosyl group of 5-phosphorylribose-1-pyrophosphate (PRPP) to anthranilate to yield N-(5'-phosphoribosyl)-anthranilate (PRA). In Roseiflexus castenholzii (strain DSM 13941 / HLO8), this protein is Anthranilate phosphoribosyltransferase.